Here is a 154-residue protein sequence, read N- to C-terminus: Myoglobin (154 aa).

In terms of domain architecture, Globin spans 2–148; sequence GLSDGEWQLV…FRNDIAAKYK (147 aa). Ser4 carries the phosphoserine modification. A nitrite-binding site is contributed by His65. His65 serves as a coordination point for O2. The residue at position 68 (Thr68) is a Phosphothreonine. His94 is a heme b binding site.

This sequence belongs to the globin family. As to quaternary structure, monomeric.

It is found in the cytoplasm. The protein localises to the sarcoplasm. The catalysed reaction is Fe(III)-heme b-[protein] + nitric oxide + H2O = Fe(II)-heme b-[protein] + nitrite + 2 H(+). The enzyme catalyses H2O2 + AH2 = A + 2 H2O. Its function is as follows. Monomeric heme protein which primary function is to store oxygen and facilitate its diffusion within muscle tissues. Reversibly binds oxygen through a pentacoordinated heme iron and enables its timely and efficient release as needed during periods of heightened demand. Depending on the oxidative conditions of tissues and cells, and in addition to its ability to bind oxygen, it also has a nitrite reductase activity whereby it regulates the production of bioactive nitric oxide. Under stress conditions, like hypoxia and anoxia, it also protects cells against reactive oxygen species thanks to its pseudoperoxidase activity. The polypeptide is Myoglobin (MB) (Proechimys guairae (Guaira spiny rat)).